We begin with the raw amino-acid sequence, 413 residues long: Multifunctional CCA protein (413 aa).

ATP-binding residues include G8 and R11. 2 residues coordinate CTP: G8 and R11. Mg(2+)-binding residues include D21 and D23. R91, R143, and R146 together coordinate ATP. The CTP site is built by R91, R143, and R146. The HD domain occupies 232–333 (TGVHVMMVVD…VRLFERSDAL (102 aa)).

It belongs to the tRNA nucleotidyltransferase/poly(A) polymerase family. Bacterial CCA-adding enzyme type 1 subfamily. As to quaternary structure, monomer. Can also form homodimers and oligomers. It depends on Mg(2+) as a cofactor. The cofactor is Ni(2+).

It carries out the reaction a tRNA precursor + 2 CTP + ATP = a tRNA with a 3' CCA end + 3 diphosphate. The catalysed reaction is a tRNA with a 3' CCA end + 2 CTP + ATP = a tRNA with a 3' CCACCA end + 3 diphosphate. Its function is as follows. Catalyzes the addition and repair of the essential 3'-terminal CCA sequence in tRNAs without using a nucleic acid template. Adds these three nucleotides in the order of C, C, and A to the tRNA nucleotide-73, using CTP and ATP as substrates and producing inorganic pyrophosphate. tRNA 3'-terminal CCA addition is required both for tRNA processing and repair. Also involved in tRNA surveillance by mediating tandem CCA addition to generate a CCACCA at the 3' terminus of unstable tRNAs. While stable tRNAs receive only 3'-terminal CCA, unstable tRNAs are marked with CCACCA and rapidly degraded. This chain is Multifunctional CCA protein, found in Burkholderia orbicola (strain MC0-3).